The primary structure comprises 493 residues: Cobyric acid synthase (493 aa).

The GATase cobBQ-type domain maps to 252-441 (DLKITVIRLP…LHGLLENGPW (190 aa)). Residue cysteine 333 is the Nucleophile of the active site. Histidine 433 is an active-site residue.

It belongs to the CobB/CobQ family. CobQ subfamily.

The protein operates within cofactor biosynthesis; adenosylcobalamin biosynthesis. In terms of biological role, catalyzes amidations at positions B, D, E, and G on adenosylcobyrinic A,C-diamide. NH(2) groups are provided by glutamine, and one molecule of ATP is hydrogenolyzed for each amidation. The protein is Cobyric acid synthase of Thermosynechococcus vestitus (strain NIES-2133 / IAM M-273 / BP-1).